A 504-amino-acid polypeptide reads, in one-letter code: Glycerol kinase (504 aa).

Thr13 contacts ADP. Positions 13, 14, and 15 each coordinate ATP. Thr13 provides a ligand contact to sn-glycerol 3-phosphate. Arg17 is a binding site for ADP. Sn-glycerol 3-phosphate contacts are provided by Arg83, Glu84, and Tyr135. Residues Arg83, Glu84, and Tyr135 each contribute to the glycerol site. His231 is subject to Phosphohistidine; by HPr. A sn-glycerol 3-phosphate-binding site is contributed by Asp245. Asp245 and Gln246 together coordinate glycerol. ADP contacts are provided by Thr267 and Gly310. ATP contacts are provided by Thr267, Gly310, Gln314, and Gly411. Residues Gly411 and Asn415 each coordinate ADP.

This sequence belongs to the FGGY kinase family. Homotetramer and homodimer (in equilibrium). The phosphoenolpyruvate-dependent sugar phosphotransferase system (PTS), including enzyme I, and histidine-containing protein (HPr) are required for the phosphorylation, which leads to the activation of the enzyme.

The catalysed reaction is glycerol + ATP = sn-glycerol 3-phosphate + ADP + H(+). Its pathway is polyol metabolism; glycerol degradation via glycerol kinase pathway; sn-glycerol 3-phosphate from glycerol: step 1/1. Activated by phosphorylation and inhibited by fructose 1,6-bisphosphate (FBP). Its function is as follows. Key enzyme in the regulation of glycerol uptake and metabolism. Catalyzes the phosphorylation of glycerol to yield sn-glycerol 3-phosphate. In Pediococcus pentosaceus (strain ATCC 25745 / CCUG 21536 / LMG 10740 / 183-1w), this protein is Glycerol kinase.